The primary structure comprises 485 residues: GlcNAc-binding protein A (485 aa).

An N-terminal signal peptide occupies residues 1-23 (MKKQPKMTAIALILSGISGLAYG). The 178-residue stretch at 24 to 201 (HGYVSAVENG…SFYNVIDVKF (178 aa)) folds into the Chitin-binding type-4 domain. The 42-residue stretch at 437 to 478 (AGTKVLASDGAIYQCKPWPYSGYCQQWTSNATQYQPGTGSHW) folds into the Chitin-binding type-3 domain.

Belongs to the GbpA family.

It localises to the secreted. Its function is as follows. Probably interacts with GlcNAc residues. May promote attachment to both epithelial cell surfaces and chitin. The polypeptide is GlcNAc-binding protein A (Vibrio cholerae serotype O1 (strain M66-2)).